The chain runs to 291 residues: Hydroxysteroid 11-beta-dehydrogenase 1-like protein B (291 aa).

The N-terminal stretch at 1–17 is a signal peptide; it reads MAGVILLLLSLCVGYIA. Residues 40–66, 91–92, and 118–120 each bind NADP(+); these read GSSTGLGEQIAYEFARMGAHIMITARR, DM, and NHI. Ser170 provides a ligand contact to substrate. Tyr183 acts as the Proton acceptor in catalysis. Residues 183–187 and 216–222 contribute to the NADP(+) site; these read YCASK and GYIDTEN.

The protein belongs to the short-chain dehydrogenases/reductases (SDR) family.

Its subcellular location is the secreted. It catalyses the reaction cortisone + NADPH + H(+) = cortisol + NADP(+). Its function is as follows. Unidirectional NADP(+)-dependent cortisol dehydrogenase (in vitro). The polypeptide is Hydroxysteroid 11-beta-dehydrogenase 1-like protein B (hsd11b1l-b) (Xenopus laevis (African clawed frog)).